The sequence spans 2455 residues: Ectopic P granules protein 5 homolog (2455 aa).

A disordered region spans residues 1–42 (MATLEKPKKEKSKKSRNRVPIEKEEEEPAELSTSEEQRPAEN). Residue Ser-44 is modified to Phosphoserine. The disordered stretch occupies residues 77 to 105 (VTSQEPEGTQEPTETEAQPSAPSAPPSTT). A compositionally biased stretch (low complexity) spans 80–97 (QEPEGTQEPTETEAQPSA). A Phosphoserine modification is found at Ser-467.

The protein belongs to the EPG5 family.

It localises to the cytoplasm. The protein localises to the perinuclear region. It is found in the lysosome. Involved in autophagy. Plays a role in late steps of autophagy. The sequence is that of Ectopic P granules protein 5 homolog from Drosophila melanogaster (Fruit fly).